Consider the following 548-residue polypeptide: MAAKDVKFGNEARIKMLRGVNVLADAVKVTLGPKGRNVVLDKSFGAPSITKDGVSVAREIELEDKFENMGAQMVKEVASKANDAAGDGTTTATLLAQSIVNEGLKAVAAGMNPMDLKRGIDKAVISAVEELKNLSVPCSDSKAITQVGTISANADEKVGALIAEAMEKVGNDGVITVEEGTGLQNELEVVKGMQFDRGYLSPYFINKPETGVVELENPYILMADKKISNVREMLPILESVAKSGKPLLIISEDLEGEALATLVVNSTRGIVKVAAVKAPGFGDRRKAMLQDISVLTGGSVISEELAMDLEKSTLEDLGQAKRVVINKDTTTIIGGVGEKQAIQSRISQIPQEIQEATSDYDKEKLNERLAKLSGGVAGLKVSAATEVEMKEKKARVEDALHATRAAVEEGVVAGGGVALVRVAGKISNLRGHNEDQNVGIRVALRAMEAPLRQIVSNSGEEPSVVTNNVKDGKGNYGYNAATDEYGDMIDFGILDPTKVTRSALQYAASVAGLMITTECMVTDLPKEDKTSDASSSPAGGMGGMGGMM.

Residues 30–33 (TLGP), K51, 87–91 (DGTTT), G415, 479–481 (NAA), and D495 each bind ATP. Residues 525 to 548 (PKEDKTSDASSSPAGGMGGMGGMM) form a disordered region. Positions 539-548 (GGMGGMGGMM) are enriched in gly residues.

Belongs to the chaperonin (HSP60) family. As to quaternary structure, forms a cylinder of 14 subunits composed of two heptameric rings stacked back-to-back. Interacts with the co-chaperonin GroES.

The protein localises to the cytoplasm. It catalyses the reaction ATP + H2O + a folded polypeptide = ADP + phosphate + an unfolded polypeptide.. Together with its co-chaperonin GroES, plays an essential role in assisting protein folding. The GroEL-GroES system forms a nano-cage that allows encapsulation of the non-native substrate proteins and provides a physical environment optimized to promote and accelerate protein folding. This Buchnera aphidicola subsp. Rhopalosiphum padi protein is Chaperonin GroEL.